The sequence spans 245 residues: 1-(5-phosphoribosyl)-5-[(5-phosphoribosylamino)methylideneamino] imidazole-4-carboxamide isomerase (245 aa).

Residue Asp-7 is the Proton acceptor of the active site. Asp-129 functions as the Proton donor in the catalytic mechanism.

The protein belongs to the HisA/HisF family.

It is found in the cytoplasm. It catalyses the reaction 1-(5-phospho-beta-D-ribosyl)-5-[(5-phospho-beta-D-ribosylamino)methylideneamino]imidazole-4-carboxamide = 5-[(5-phospho-1-deoxy-D-ribulos-1-ylimino)methylamino]-1-(5-phospho-beta-D-ribosyl)imidazole-4-carboxamide. Its pathway is amino-acid biosynthesis; L-histidine biosynthesis; L-histidine from 5-phospho-alpha-D-ribose 1-diphosphate: step 4/9. This Edwardsiella ictaluri (strain 93-146) protein is 1-(5-phosphoribosyl)-5-[(5-phosphoribosylamino)methylideneamino] imidazole-4-carboxamide isomerase.